The chain runs to 372 residues: ATP phosphoribosyltransferase regulatory subunit (372 aa).

The protein belongs to the class-II aminoacyl-tRNA synthetase family. HisZ subfamily. In terms of assembly, heteromultimer composed of HisG and HisZ subunits.

The protein localises to the cytoplasm. It participates in amino-acid biosynthesis; L-histidine biosynthesis; L-histidine from 5-phospho-alpha-D-ribose 1-diphosphate: step 1/9. Required for the first step of histidine biosynthesis. May allow the feedback regulation of ATP phosphoribosyltransferase activity by histidine. This Allorhizobium ampelinum (strain ATCC BAA-846 / DSM 112012 / S4) (Agrobacterium vitis (strain S4)) protein is ATP phosphoribosyltransferase regulatory subunit.